The following is a 152-amino-acid chain: MIIGVLNGPNLNLLGTREPAVYGTATLADIMAHLEGVAGALGVQLRTAQSNSEGALIDILHDWRGVVDGVVVNAGAYTHTSLALRDAFTATAIPFIEVHLSNIHAREPERRHSMLASASIGMICGLGADGYEFGLRGLVRALELKRQSTATG.

Y22 serves as the catalytic Proton acceptor. Positions 73, 79, and 86 each coordinate substrate. Residue H99 is the Proton donor of the active site. Residues 100–101 and R110 contribute to the substrate site; that span reads LS.

Belongs to the type-II 3-dehydroquinase family. Homododecamer.

The catalysed reaction is 3-dehydroquinate = 3-dehydroshikimate + H2O. It functions in the pathway metabolic intermediate biosynthesis; chorismate biosynthesis; chorismate from D-erythrose 4-phosphate and phosphoenolpyruvate: step 3/7. In terms of biological role, catalyzes a trans-dehydration via an enolate intermediate. The protein is 3-dehydroquinate dehydratase of Gemmatimonas aurantiaca (strain DSM 14586 / JCM 11422 / NBRC 100505 / T-27).